Reading from the N-terminus, the 133-residue chain is Transcription antitermination protein NusB (133 aa).

The protein belongs to the NusB family.

Functionally, involved in transcription antitermination. Required for transcription of ribosomal RNA (rRNA) genes. Binds specifically to the boxA antiterminator sequence of the ribosomal RNA (rrn) operons. The polypeptide is Transcription antitermination protein NusB (Shouchella clausii (strain KSM-K16) (Alkalihalobacillus clausii)).